A 248-amino-acid polypeptide reads, in one-letter code: Caffeoyl-CoA O-methyltransferase 3 (248 aa).

Lys-22 serves as a coordination point for substrate. S-adenosyl-L-methionine-binding positions include Thr-64, Glu-86, 88-89, Ser-94, Asp-112, and Ala-141; that span reads GV. Asp-164 lines the substrate pocket. Asp-164 lines the a divalent metal cation pocket. Asp-166 provides a ligand contact to S-adenosyl-L-methionine. 2 residues coordinate a divalent metal cation: Asp-190 and Asn-191. Asn-195 serves as a coordination point for substrate.

This sequence belongs to the class I-like SAM-binding methyltransferase superfamily. Cation-dependent O-methyltransferase family. CCoAMT subfamily. It depends on a divalent metal cation as a cofactor. As to expression, mostly expressed in petal limbs and tubes, and, at low levels, in stems, roots and leaves.

It is found in the cytoplasm. It localises to the cytosol. It carries out the reaction (E)-caffeoyl-CoA + S-adenosyl-L-methionine = (E)-feruloyl-CoA + S-adenosyl-L-homocysteine + H(+). The catalysed reaction is (E)-5-hydroxyferuloyl-CoA + S-adenosyl-L-methionine = (E)-sinapoyl-CoA + S-adenosyl-L-homocysteine + H(+). It functions in the pathway aromatic compound metabolism; phenylpropanoid biosynthesis. Its function is as follows. Involved in the production of floral volatile phenylpropanoids in flowers of fragrant cultivars (e.g. cv. Mitchell and cv. V26) from cinnamic acid, a common precursor with the anthocyanin biosynthesis pathway involved in flower pigmentation. Methylates caffeoyl-CoA to feruloyl-CoA, also able to methylate 5-hydroxyferuloyl-CoA. This is Caffeoyl-CoA O-methyltransferase 3 from Petunia hybrida (Petunia).